A 225-amino-acid chain; its full sequence is PKHD-type hydroxylase Smal_0990 (225 aa).

A Fe2OG dioxygenase domain is found at 78-177 (KYLPPRFNRY…RVASFFWVQS (100 aa)). Positions 96, 98, and 158 each coordinate Fe cation. R168 is a binding site for 2-oxoglutarate.

The cofactor is Fe(2+). L-ascorbate serves as cofactor.

The protein is PKHD-type hydroxylase Smal_0990 of Stenotrophomonas maltophilia (strain R551-3).